The chain runs to 165 residues: SsrA-binding protein (165 aa).

Residues 135–158 (QAHDKRQDMARRDAQREVTRELGR) are compositionally biased toward basic and acidic residues. The interval 135-165 (QAHDKRQDMARRDAQREVTRELGRRVKGMTS) is disordered.

Belongs to the SmpB family.

The protein localises to the cytoplasm. Required for rescue of stalled ribosomes mediated by trans-translation. Binds to transfer-messenger RNA (tmRNA), required for stable association of tmRNA with ribosomes. tmRNA and SmpB together mimic tRNA shape, replacing the anticodon stem-loop with SmpB. tmRNA is encoded by the ssrA gene; the 2 termini fold to resemble tRNA(Ala) and it encodes a 'tag peptide', a short internal open reading frame. During trans-translation Ala-aminoacylated tmRNA acts like a tRNA, entering the A-site of stalled ribosomes, displacing the stalled mRNA. The ribosome then switches to translate the ORF on the tmRNA; the nascent peptide is terminated with the 'tag peptide' encoded by the tmRNA and targeted for degradation. The ribosome is freed to recommence translation, which seems to be the essential function of trans-translation. This Mycolicibacterium vanbaalenii (strain DSM 7251 / JCM 13017 / BCRC 16820 / KCTC 9966 / NRRL B-24157 / PYR-1) (Mycobacterium vanbaalenii) protein is SsrA-binding protein.